The sequence spans 209 residues: Orotate phosphoribosyltransferase (209 aa).

Residues arginine 96, lysine 100, histidine 102, and glutamate 122–serine 130 each bind 5-phospho-alpha-D-ribose 1-diphosphate. Serine 126 provides a ligand contact to orotate.

This sequence belongs to the purine/pyrimidine phosphoribosyltransferase family. PyrE subfamily. In terms of assembly, homodimer. Mg(2+) is required as a cofactor.

The enzyme catalyses orotidine 5'-phosphate + diphosphate = orotate + 5-phospho-alpha-D-ribose 1-diphosphate. It participates in pyrimidine metabolism; UMP biosynthesis via de novo pathway; UMP from orotate: step 1/2. In terms of biological role, catalyzes the transfer of a ribosyl phosphate group from 5-phosphoribose 1-diphosphate to orotate, leading to the formation of orotidine monophosphate (OMP). This is Orotate phosphoribosyltransferase from Streptococcus pyogenes serotype M2 (strain MGAS10270).